The primary structure comprises 120 residues: Ribosome-binding factor A (120 aa).

Belongs to the RbfA family. As to quaternary structure, monomer. Binds 30S ribosomal subunits, but not 50S ribosomal subunits or 70S ribosomes.

It localises to the cytoplasm. Functionally, one of several proteins that assist in the late maturation steps of the functional core of the 30S ribosomal subunit. Associates with free 30S ribosomal subunits (but not with 30S subunits that are part of 70S ribosomes or polysomes). Required for efficient processing of 16S rRNA. May interact with the 5'-terminal helix region of 16S rRNA. In Borreliella burgdorferi (strain ATCC 35210 / DSM 4680 / CIP 102532 / B31) (Borrelia burgdorferi), this protein is Ribosome-binding factor A.